We begin with the raw amino-acid sequence, 1977 residues long: Echinoderm microtubule-associated protein-like 5 (1977 aa).

WD repeat units lie at residues 59-100, 104-145, 148-187, 195-233, 235-273, 280-321, 323-362, 364-403, 406-445, 449-488, and 561-601; these read GHSD…TVSV, VHTH…MLSM, GHTDRIFDISWDLYQPNKLVSCGVKHIKFWSLCGNALTPK, GDLQTILCLACARDELTYSGALNGDIYVWKGINLIRTIQ, AHTAGIFSMNACEEGFATGGRDGCIRLWDLTFKPITVID, GYKG…LIMQ, HCEGELWALAVHPTKPLAVTGSDDRSVRIWSLVDHALIAR, NMDEPIRCAAVNADGVHLALGMKDGSLTVLRVRDMTEVVH, DRKEAIHELKYSPDGTYLAVGCNDSSVDIYGVAQRYKKVG, GSLSFITHLDWSSDSKYLQTNDGSGKRLLYKMPGGKEVTS, and GHSA…KLKD. Residues 609 to 629 form a disordered region; sequence ESLTESNSDESDSDLSDVPEL. Positions 615–629 are enriched in acidic residues; the sequence is NSDESDSDLSDVPEL. WD repeat units follow at residues 725–766, 770–811, 814–853, 861–900, 901–940, 996–1035, 1038–1077, 1080–1120, and 1236–1276; these read GHDD…PLSI, YHQY…KLSV, GSKDKIFVVKMNPYVPDKLITAGIKHMKFWRRAGGGLIGR, GKNDTMMCAVYGWTEEMAFSGTSTGDVCIWRDVFLVKTVK, AHDGPVFSMHALEKGFVTGGKDGVVALWDDSFERCLKTYA, HMEGEVWGLATHPYLPICATVSDDKTLRIWDLSPSHCMLA, KLKKGGRCCCFSPDGKALAVGLNDGSFLMANADTLEDLVS, HRKD…RVGV, and AHST…HREK. Disordered regions lie at residues 1274-1299 and 1323-1363; these read REKKNCDSEESDTDSEEDGGYDSDVT and PHLQ…NVGK. Residues 1281 to 1294 show a composition bias toward acidic residues; it reads SEESDTDSEEDGGY. Positions 1326 to 1337 are enriched in basic and acidic residues; sequence QQKEPSVDERQG. WD repeat units follow at residues 1420–1471, 1475–1516, 1519–1558, 1568–1606, 1608–1654, 1699–1739, 1741–1782, 1783–1822, 1895–1934, and 1940–1977; these read EHND…TLSI, SHSK…KIAS, GHNQRIFVAEFRPDSDTQFVSVGIKHVKFWTLAGRALLSK, ARMQTMLAVAFGANNLTFTGTISGDVCVWKDHILCRVVA, AHNG…RAFR, GHVD…MLNK, NLGH…GKKR, DRRCAIHDIRFSPDSRYLAVGSSENSVDFYDLTLGPTLNR, AEKADVTCACVSHSGISLVTGDDFGMVKLYDFPCPEKFAK, and GHSPHVTNIRFTSGDRHVVSAGGDDCSVFVWKCVHTPH.

The protein belongs to the WD repeat EMAP family. As to expression, highly expressed in brain, especially in hippocampus, cerebellum and olfactory bulb (at protein level).

It localises to the cytoplasm. The protein localises to the cytoskeleton. Its function is as follows. May modify the assembly dynamics of microtubules, such that microtubules are slightly longer, but more dynamic. The protein is Echinoderm microtubule-associated protein-like 5 (Eml5) of Rattus norvegicus (Rat).